Consider the following 593-residue polypeptide: MKDADDSEEVKEEQAKGTKKGRKSSEPAATENDDDKPTKNKFAGILSKFERSKKARELEKTRESTKDEDSTEPTTAEPVIAQGLEPLPQPEAAPEQDEMPTYSSLPPWLANPLRASAQERRKFADLGIDSSLLRVLEDNGYREAFAVQSTVIPLLLQGPTNHPGDLCISAATGSGKTLSYVLPLVTALKPLPAPRLRGLIVVPTRELVKQAREACELCAAGSGLRVASAVGNVAIKDEQRESLPGYVHRSEPNVDILICTPGRLVDHLRYTKGFTLKNLEWLVIDEADRLLNESFQEWVDVVMTSLDARKAPDAFGFSGNFLSGLGLPIQSKEPRKVVLSATMTRDVTKLNSLRLANPKLVVIGSDAAATEDESGGVAPSDEQFTLPPTLEEHTVSVGDGSQKPLYLLRLLLSHIKLETKILVFTKSSESASRLARLLALLEPSLSDRIGTIIKSNKSSASRKTLTAYRRGKISVIIATDRASRGLDLRSLTHVVNYDVPASITTYVHRVGRTARAGQKGSAWTLVAHREGKWFASQIAKGSDGKITRSTKVGKVQFKLDNMKEVKARYASALDLLEKEVKTGGTKASKPSAQ.

Positions 1–11 are enriched in acidic residues; the sequence is MKDADDSEEVK. A disordered region spans residues 1-103; sequence MKDADDSEEV…PEQDEMPTYS (103 aa). Basic and acidic residues predominate over residues 48–68; it reads KFERSKKARELEKTRESTKDE. The span at 84 to 93 shows a compositional bias: low complexity; the sequence is LEPLPQPEAA. Residues 121–149 carry the Q motif motif; sequence RKFADLGIDSSLLRVLEDNGYREAFAVQS. The 205-residue stretch at 157-361 folds into the Helicase ATP-binding domain; sequence QGPTNHPGDL…SLRLANPKLV (205 aa). 170-177 provides a ligand contact to ATP; it reads AATGSGKT. The DEAD box motif lies at 285 to 288; sequence DEAD. Residues 407 to 563 form the Helicase C-terminal domain; it reads LLRLLLSHIK…KVQFKLDNMK (157 aa).

It belongs to the DEAD box helicase family. DDX51/DBP6 subfamily. In terms of assembly, associated with pre-ribosomal particles.

The protein localises to the nucleus. The protein resides in the nucleolus. It catalyses the reaction ATP + H2O = ADP + phosphate + H(+). ATP-binding RNA helicase involved in the biogenesis of 60S ribosomal subunits and is required for the normal formation of 25S and 5.8S rRNAs. The polypeptide is ATP-dependent RNA helicase dbp6 (dbp6) (Aspergillus niger (strain ATCC MYA-4892 / CBS 513.88 / FGSC A1513)).